The chain runs to 269 residues: Eukaryotic translation initiation factor 3 subunit G-1 (269 aa).

An RRM domain is found at Ala188–Pro266.

Belongs to the eIF-3 subunit G family. In terms of assembly, component of the eukaryotic translation initiation factor 3 (eIF-3) complex. The eIF-3 complex interacts with pix.

Its subcellular location is the cytoplasm. Functionally, RNA-binding component of the eukaryotic translation initiation factor 3 (eIF-3) complex, which is involved in protein synthesis of a specialized repertoire of mRNAs and, together with other initiation factors, stimulates binding of mRNA and methionyl-tRNAi to the 40S ribosome. The eIF-3 complex specifically targets and initiates translation of a subset of mRNAs involved in cell proliferation. This subunit can bind 18S rRNA. The protein is Eukaryotic translation initiation factor 3 subunit G-1 of Drosophila mojavensis (Fruit fly).